Consider the following 89-residue polypeptide: Large ribosomal subunit protein bL27 (89 aa).

A disordered region spans residues 1 to 21; the sequence is MAHKKSGGSSSNGRDSESKRL.

Belongs to the bacterial ribosomal protein bL27 family.

This is Large ribosomal subunit protein bL27 from Caulobacter vibrioides (strain NA1000 / CB15N) (Caulobacter crescentus).